Here is an 853-residue protein sequence, read N- to C-terminus: G-type lectin S-receptor-like serine/threonine-protein kinase SRK (853 aa).

The signal sequence occupies residues 1 to 31 (MRGELPNKHHSYTFFVFLFFFLILFPDLSIS). Residues 32–441 (VNTLSATESL…FGERRTIRGK (410 aa)) lie on the Extracellular side of the membrane. Positions 34-154 (TLSATESLTI…KINESDEFLW (121 aa)) constitute a Bulb-type lectin domain. N-linked (GlcNAc...) asparagine glycans are attached at residues Asn46, Asn120, Asn147, and Asn243. Residues 293 to 329 (PKDTCDLYGICGPYAYCDMSTSPTCNCIKGFQPLSPQ) form the EGF-like; atypical domain. Cystine bridges form between Cys297-Cys309, Cys303-Cys317, Cys378-Cys403, and Cys382-Cys388. Positions 348–428 (CGEDRFFRLM…DGQDLFVRLA (81 aa)) constitute a PAN domain. Asn387 carries an N-linked (GlcNAc...) asparagine glycan. The chain crosses the membrane as a helical span at residues 442-462 (IIGLIIGISLMLVLSFIIYCF). At 463–853 (WKKKQKRARA…QITVSVINAR (391 aa)) the chain is on the cytoplasmic side. The region spanning 524–802 (FSDSNILGRG…PKMSSVVLML (279 aa)) is the Protein kinase domain. Residues 530 to 538 (LGRGGFGIV) and Lys552 each bind ATP. At Ser558 the chain carries Phosphoserine. The tract at residues 613–631 (TQSSNKLNWQTRFSIINGI) is caM-binding. The active-site Proton acceptor is the Asp650. A phosphoserine mark is found at Ser654 and Ser667. At Thr684 the chain carries Phosphothreonine. Residues 807 to 838 (GEIPQPKRPGYCVGRSSLDTADSSSSTKRDSE) form a disordered region. Residues 822–832 (SSLDTADSSSS) show a composition bias toward low complexity. Phosphoserine is present on Ser831.

Belongs to the protein kinase superfamily. Ser/Thr protein kinase family.

It is found in the cell membrane. The enzyme catalyses L-seryl-[protein] + ATP = O-phospho-L-seryl-[protein] + ADP + H(+). The catalysed reaction is L-threonyl-[protein] + ATP = O-phospho-L-threonyl-[protein] + ADP + H(+). In terms of biological role, female specificity determinant of self-incompatibility. In Arabidopsis thaliana (Mouse-ear cress), this protein is G-type lectin S-receptor-like serine/threonine-protein kinase SRK (SRK).